Reading from the N-terminus, the 430-residue chain is tRNA(Ile)-lysidine synthase (430 aa).

21–26 contributes to the ATP binding site; the sequence is SGGLDS.

Belongs to the tRNA(Ile)-lysidine synthase family.

Its subcellular location is the cytoplasm. The catalysed reaction is cytidine(34) in tRNA(Ile2) + L-lysine + ATP = lysidine(34) in tRNA(Ile2) + AMP + diphosphate + H(+). Its function is as follows. Ligates lysine onto the cytidine present at position 34 of the AUA codon-specific tRNA(Ile) that contains the anticodon CAU, in an ATP-dependent manner. Cytidine is converted to lysidine, thus changing the amino acid specificity of the tRNA from methionine to isoleucine. This is tRNA(Ile)-lysidine synthase from Salmonella typhi.